Consider the following 392-residue polypeptide: Tryptophan synthase beta chain (392 aa).

An N6-(pyridoxal phosphate)lysine modification is found at Lys-86.

This sequence belongs to the TrpB family. As to quaternary structure, tetramer of two alpha and two beta chains. It depends on pyridoxal 5'-phosphate as a cofactor.

It carries out the reaction (1S,2R)-1-C-(indol-3-yl)glycerol 3-phosphate + L-serine = D-glyceraldehyde 3-phosphate + L-tryptophan + H2O. It functions in the pathway amino-acid biosynthesis; L-tryptophan biosynthesis; L-tryptophan from chorismate: step 5/5. Functionally, the beta subunit is responsible for the synthesis of L-tryptophan from indole and L-serine. The polypeptide is Tryptophan synthase beta chain (Methanocorpusculum labreanum (strain ATCC 43576 / DSM 4855 / Z)).